Here is a 212-residue protein sequence, read N- to C-terminus: Ubiquitin-like protein MDY2 (212 aa).

The 79-residue stretch at 74–152 (VHLTLKKIQA…TITVMIKPNP (79 aa)) folds into the Ubiquitin-like domain. A disordered region spans residues 150 to 177 (PNPTISKEPEAEKSTNSPAPAPPQELTV).

Interacts with GET4.

It is found in the cytoplasm. It localises to the cytosol. The protein resides in the nucleus. Functionally, required for efficient mating. Involved in the production of alpha-factor, the KAR9 and TUB1 location to the shmoo tip and nuclear migration into pheromone-induced shmoos. The protein is Ubiquitin-like protein MDY2 (MDY2) of Saccharomyces cerevisiae (strain ATCC 204508 / S288c) (Baker's yeast).